The following is a 118-amino-acid chain: Large ribosomal subunit protein bL20 (118 aa).

The protein belongs to the bacterial ribosomal protein bL20 family.

Binds directly to 23S ribosomal RNA and is necessary for the in vitro assembly process of the 50S ribosomal subunit. It is not involved in the protein synthesizing functions of that subunit. This chain is Large ribosomal subunit protein bL20, found in Clostridioides difficile (strain 630) (Peptoclostridium difficile).